The sequence spans 204 residues: Protein OPG030 (204 aa).

In terms of domain architecture, BACK spans 95-177 (FLRQYINNNI…ITYSELTNAI (83 aa)).

It belongs to the orthopoxvirus OPG030 family.

This Bos taurus (Bovine) protein is Protein OPG030 (OPG30).